Here is a 700-residue protein sequence, read N- to C-terminus: Elongation factor G (700 aa).

The tr-type G domain occupies 8 to 290 (ERYRNIGISA…AVIDYLPAPT (283 aa)). GTP contacts are provided by residues 17–24 (AHIDAGKT), 88–92 (DTPGH), and 142–145 (NKMD).

It belongs to the TRAFAC class translation factor GTPase superfamily. Classic translation factor GTPase family. EF-G/EF-2 subfamily.

It is found in the cytoplasm. Functionally, catalyzes the GTP-dependent ribosomal translocation step during translation elongation. During this step, the ribosome changes from the pre-translocational (PRE) to the post-translocational (POST) state as the newly formed A-site-bound peptidyl-tRNA and P-site-bound deacylated tRNA move to the P and E sites, respectively. Catalyzes the coordinated movement of the two tRNA molecules, the mRNA and conformational changes in the ribosome. In Glaesserella parasuis serovar 5 (strain SH0165) (Haemophilus parasuis), this protein is Elongation factor G.